The sequence spans 373 residues: Alanine dehydrogenase (373 aa).

2 residues coordinate substrate: arginine 15 and lysine 74. Histidine 95 (proton donor/acceptor) is an active-site residue. NAD(+) is bound by residues serine 133, 177-178 (QA), aspartate 197, serine 219, 238-239 (VL), 266-269 (IAID), and 298-301 (VANM). Residue aspartate 269 is the Proton donor/acceptor of the active site.

Belongs to the AlaDH/PNT family. Homohexamer. Trimer of dimer.

The enzyme catalyses L-alanine + NAD(+) + H2O = pyruvate + NH4(+) + NADH + H(+). The protein operates within amino-acid degradation; L-alanine degradation via dehydrogenase pathway; NH(3) and pyruvate from L-alanine: step 1/1. Catalyzes the reversible reductive amination of pyruvate to L-alanine. May play a role in cell wall synthesis as L-alanine is an important constituent of the peptidoglycan layer. This is Alanine dehydrogenase (ald) from Staphylococcus haemolyticus (strain JCSC1435).